Reading from the N-terminus, the 262-residue chain is uncharacterized protein (262 aa).

In terms of domain architecture, Radical SAM core spans 1–211; the sequence is MAFHVMIIPS…LLYLLDSYLE (211 aa). [4Fe-4S] cluster contacts are provided by cysteine 13, cysteine 17, and cysteine 20.

The protein belongs to the radical SAM superfamily. Anaerobic sulfatase-maturating enzyme family. It depends on [4Fe-4S] cluster as a cofactor.

This is an uncharacterized protein from Methanothermobacter thermautotrophicus (strain ATCC 29096 / DSM 1053 / JCM 10044 / NBRC 100330 / Delta H) (Methanobacterium thermoautotrophicum).